Reading from the N-terminus, the 313-residue chain is Ribonuclease Z (313 aa).

Positions 62, 64, 66, 67, 142, 212, and 270 each coordinate Zn(2+). Catalysis depends on aspartate 66, which acts as the Proton acceptor.

It belongs to the RNase Z family. Homodimer. It depends on Zn(2+) as a cofactor.

The catalysed reaction is Endonucleolytic cleavage of RNA, removing extra 3' nucleotides from tRNA precursor, generating 3' termini of tRNAs. A 3'-hydroxy group is left at the tRNA terminus and a 5'-phosphoryl group is left at the trailer molecule.. In terms of biological role, zinc phosphodiesterase, which displays some tRNA 3'-processing endonuclease activity. Probably involved in tRNA maturation, by removing a 3'-trailer from precursor tRNA. This Cytophaga hutchinsonii (strain ATCC 33406 / DSM 1761 / CIP 103989 / NBRC 15051 / NCIMB 9469 / D465) protein is Ribonuclease Z.